The primary structure comprises 508 residues: BICD family-like cargo adapter 2 (508 aa).

Positions 1 to 22 (MSSPDGPSFPSGPLSGGASPSG) are enriched in low complexity. 3 disordered regions span residues 1-27 (MSSP…EGFF), 132-152 (LGEQ…ALSE), and 300-351 (AHSL…TSLS). 2 coiled-coil regions span residues 64-300 (AAEL…SELA) and 353-458 (AEIL…DMQV). Residues 135–149 (QRSEQQDSGRERARA) are compositionally biased toward basic and acidic residues. Residues 470–491 (KELSASASSSTPRRAAPRFSLR) form a disordered region. Residues 473–489 (SASASSSTPRRAAPRFS) are compositionally biased toward low complexity.

The protein belongs to the BICDR family. In terms of assembly, interacts with RAB13.

The sequence is that of BICD family-like cargo adapter 2 (BICDL2) from Homo sapiens (Human).